Consider the following 166-residue polypeptide: Protein UTR5 (166 aa).

This is Protein UTR5 (UTR5) from Saccharomyces cerevisiae (strain ATCC 204508 / S288c) (Baker's yeast).